Reading from the N-terminus, the 891-residue chain is Valine--tRNA ligase (891 aa).

Positions 43–53 (PFTSGTLHLGH) match the 'HIGH' region motif. A 'KMSKS' region motif is present at residues 536–540 (KMSKS). Position 539 (K539) interacts with ATP.

It belongs to the class-I aminoacyl-tRNA synthetase family. ValS type 2 subfamily.

Its subcellular location is the cytoplasm. The catalysed reaction is tRNA(Val) + L-valine + ATP = L-valyl-tRNA(Val) + AMP + diphosphate. Catalyzes the attachment of valine to tRNA(Val). As ValRS can inadvertently accommodate and process structurally similar amino acids such as threonine, to avoid such errors, it has a 'posttransfer' editing activity that hydrolyzes mischarged Thr-tRNA(Val) in a tRNA-dependent manner. The protein is Valine--tRNA ligase of Pyrococcus abyssi (strain GE5 / Orsay).